Consider the following 242-residue polypeptide: Ubiquinone biosynthesis O-methyltransferase (242 aa).

Residues Arg-44, Gly-64, Asp-85, and Met-129 each coordinate S-adenosyl-L-methionine.

The protein belongs to the methyltransferase superfamily. UbiG/COQ3 family.

It catalyses the reaction a 3-demethylubiquinol + S-adenosyl-L-methionine = a ubiquinol + S-adenosyl-L-homocysteine + H(+). The catalysed reaction is a 3-(all-trans-polyprenyl)benzene-1,2-diol + S-adenosyl-L-methionine = a 2-methoxy-6-(all-trans-polyprenyl)phenol + S-adenosyl-L-homocysteine + H(+). It functions in the pathway cofactor biosynthesis; ubiquinone biosynthesis. Functionally, O-methyltransferase that catalyzes the 2 O-methylation steps in the ubiquinone biosynthetic pathway. This chain is Ubiquinone biosynthesis O-methyltransferase, found in Salmonella paratyphi A (strain ATCC 9150 / SARB42).